The sequence spans 366 residues: Chorismate synthase (366 aa).

Positions 48 and 54 each coordinate NADP(+). Residues 132–134 (RSS), 244–245 (NA), Gly289, 304–308 (KPTSS), and Arg330 each bind FMN.

Belongs to the chorismate synthase family. In terms of assembly, homotetramer. FMNH2 is required as a cofactor.

The catalysed reaction is 5-O-(1-carboxyvinyl)-3-phosphoshikimate = chorismate + phosphate. Its pathway is metabolic intermediate biosynthesis; chorismate biosynthesis; chorismate from D-erythrose 4-phosphate and phosphoenolpyruvate: step 7/7. Its function is as follows. Catalyzes the anti-1,4-elimination of the C-3 phosphate and the C-6 proR hydrogen from 5-enolpyruvylshikimate-3-phosphate (EPSP) to yield chorismate, which is the branch point compound that serves as the starting substrate for the three terminal pathways of aromatic amino acid biosynthesis. This reaction introduces a second double bond into the aromatic ring system. The polypeptide is Chorismate synthase (Methylobacterium radiotolerans (strain ATCC 27329 / DSM 1819 / JCM 2831 / NBRC 15690 / NCIMB 10815 / 0-1)).